Consider the following 275-residue polypeptide: Release factor glutamine methyltransferase (275 aa).

Residues 114 to 118 (GTGSG), aspartate 137, tryptophan 165, and asparagine 180 each bind S-adenosyl-L-methionine. 180 to 183 (NPPY) contacts substrate.

This sequence belongs to the protein N5-glutamine methyltransferase family. PrmC subfamily.

The enzyme catalyses L-glutaminyl-[peptide chain release factor] + S-adenosyl-L-methionine = N(5)-methyl-L-glutaminyl-[peptide chain release factor] + S-adenosyl-L-homocysteine + H(+). Methylates the class 1 translation termination release factors RF1/PrfA and RF2/PrfB on the glutamine residue of the universally conserved GGQ motif. The sequence is that of Release factor glutamine methyltransferase from Xylella fastidiosa (strain 9a5c).